We begin with the raw amino-acid sequence, 357 residues long: uncharacterized protein (357 aa).

The Radical SAM core domain occupies 27-242; that stretch reads HFGNTVTFER…VSSVRLNFPK (216 aa). Residues Cys44, Cys50, and Cys53 each contribute to the [4Fe-4S] cluster site.

The cofactor is [4Fe-4S] cluster.

This is an uncharacterized protein from Methanocaldococcus jannaschii (strain ATCC 43067 / DSM 2661 / JAL-1 / JCM 10045 / NBRC 100440) (Methanococcus jannaschii).